The sequence spans 322 residues: Malate dehydrogenase (322 aa).

Residues 10 to 15 (GSGQIG) and D34 each bind NAD(+). R83 and R89 together coordinate substrate. Residues N96 and 119 to 121 (ITN) each bind NAD(+). Residues N121 and R152 each coordinate substrate. H176 serves as the catalytic Proton acceptor.

This sequence belongs to the LDH/MDH superfamily. MDH type 3 family.

The enzyme catalyses (S)-malate + NAD(+) = oxaloacetate + NADH + H(+). In terms of biological role, catalyzes the reversible oxidation of malate to oxaloacetate. The protein is Malate dehydrogenase of Bradyrhizobium sp. (strain BTAi1 / ATCC BAA-1182).